A 283-amino-acid polypeptide reads, in one-letter code: MLKTVLITGCSHGGLGAAMAKIYHAKGFQVFATVRNKAKVGSLGGIDGIEIMELEVTSVESIRQCANTVAKRTGGTLDILVNNAGVNAIVPLLDASLDDAKKVYDANVWSVVAMAQAFAPMLIKAKGTMCNISSVSGEMVFAWAGVYSSSRSAGTRISETLRLELAPLGVRVVTVILGGVQTSGNDPSNIADLELPSSSYYQKITAVIDLHKKTMVHPNKQNVDVAAENVVNDLLNGRGIFIRRGQASTLSWLFNTFLPYRLFTYLINRESALDKIGFRGDTE.

Residues 1-20 (MLKTVLITGCSHGGLGAAMA) form the signal peptide. NADP(+) is bound by residues Ile7, Thr33, Lys39, Glu55, and Asn83. Asn131 carries an N-linked (GlcNAc...) asparagine glycan. Residue Ser133 is the Proton donor of the active site. Residues Tyr147, Arg151, Val180, and Thr182 each coordinate NADP(+). The active-site Proton acceptor is the Tyr147.

The protein belongs to the short-chain dehydrogenases/reductases (SDR) family.

Functionally, short-chain dehydrogenase; part of the gene cluster that mediates the biosynthesis of the mycotoxin cyclochlorotine, a hepatotoxic and carcinogenic cyclic chlorinated pentapeptide. The function of cctT within the pathway, if any, remains undetermined. The NRPS cctN initially catalyzes the condensation of L-serine (Ser), Pro, L-2-aminobutyrate (2Abu), Ser, and beta-Phe in this order to produce isocyclotine. After the dichlorination of Pro2 catalyzed by cctP2 to produce isocyclochlorotine, the cctO-mediated transacylation of isocyclochlorotine can furnish cyclochlorotine. The subsequent hydroxylation of cyclochlorotine by cctR yields hydroxycyclochlorotine as the final product. CctP1 probably acts as a phenylalanine aminomutase and provides the uncommon building block beta-Phe. Furthermore, 2Abu can be synthesized from threonine by one of the threonine dehydratases and transaminases localized outside of the cluster. The functions of the remaining proteins encoded by the cluster, cctM and cctT, have not been identified yet. This Talaromyces islandicus (Penicillium islandicum) protein is Short-chain dehydrogenase cctT.